Here is a 410-residue protein sequence, read N- to C-terminus: Regulator of microtubule dynamics protein 2 (410 aa).

A helical transmembrane segment spans residues 9 to 28 (LILGIMAGTAGISLLAFWYH). S51 is subject to Phosphoserine. Residues 69–110 (QRRQLQILEKLNELLTNMEELKEEIRFLKETIPKLEECIQDE) are a coiled coil. The segment at 120–151 (ISPQHRARKKKGTTVQRSATSNSSEEAESEGG) is disordered. Phosphoserine is present on S121. Positions 121–131 (SPQHRARKKKG) are enriched in basic residues. T139 is modified (phosphothreonine). Y152 is subject to Phosphotyrosine. A phosphothreonine mark is found at T154 and T157.

Belongs to the RMDN family. In terms of assembly, interacts with microtubules.

It is found in the membrane. The protein localises to the cytoplasm. The protein resides in the cytoskeleton. Its subcellular location is the spindle. It localises to the spindle pole. This is Regulator of microtubule dynamics protein 2 (Rmdn2) from Mus musculus (Mouse).